Reading from the N-terminus, the 886-residue chain is Protein translocase subunit SecA (886 aa).

ATP contacts are provided by residues Gln81, 99–103 (GEGKT), and Asp489.

This sequence belongs to the SecA family.

It is found in the plastid. The protein localises to the chloroplast stroma. It localises to the chloroplast thylakoid membrane. The catalysed reaction is ATP + H2O + cellular proteinSide 1 = ADP + phosphate + cellular proteinSide 2.. In terms of biological role, has a central role in coupling the hydrolysis of ATP to the transfer of proteins across the thylakoid membrane. The polypeptide is Protein translocase subunit SecA (Phaeodactylum tricornutum (strain CCAP 1055/1)).